The following is a 357-amino-acid chain: Phosphoribosylformylglycinamidine cyclo-ligase (357 aa).

This sequence belongs to the AIR synthase family.

It localises to the cytoplasm. It catalyses the reaction 2-formamido-N(1)-(5-O-phospho-beta-D-ribosyl)acetamidine + ATP = 5-amino-1-(5-phospho-beta-D-ribosyl)imidazole + ADP + phosphate + H(+). Its pathway is purine metabolism; IMP biosynthesis via de novo pathway; 5-amino-1-(5-phospho-D-ribosyl)imidazole from N(2)-formyl-N(1)-(5-phospho-D-ribosyl)glycinamide: step 2/2. This is Phosphoribosylformylglycinamidine cyclo-ligase from Rhizobium leguminosarum.